A 333-amino-acid polypeptide reads, in one-letter code: 4-hydroxy-3-methylbut-2-enyl diphosphate reductase (333 aa).

Cys-20 lines the [4Fe-4S] cluster pocket. The (2E)-4-hydroxy-3-methylbut-2-enyl diphosphate site is built by His-49 and His-85. Residues His-49 and His-85 each coordinate dimethylallyl diphosphate. Positions 49 and 85 each coordinate isopentenyl diphosphate. Cys-107 lines the [4Fe-4S] cluster pocket. His-135 provides a ligand contact to (2E)-4-hydroxy-3-methylbut-2-enyl diphosphate. Dimethylallyl diphosphate is bound at residue His-135. An isopentenyl diphosphate-binding site is contributed by His-135. Glu-137 serves as the catalytic Proton donor. Thr-176 provides a ligand contact to (2E)-4-hydroxy-3-methylbut-2-enyl diphosphate. A [4Fe-4S] cluster-binding site is contributed by Cys-206. Ser-234, Ser-235, Asn-236, and Ser-279 together coordinate (2E)-4-hydroxy-3-methylbut-2-enyl diphosphate. Dimethylallyl diphosphate contacts are provided by Ser-234, Ser-235, Asn-236, and Ser-279. Positions 234, 235, 236, and 279 each coordinate isopentenyl diphosphate.

Belongs to the IspH family. [4Fe-4S] cluster is required as a cofactor.

It carries out the reaction isopentenyl diphosphate + 2 oxidized [2Fe-2S]-[ferredoxin] + H2O = (2E)-4-hydroxy-3-methylbut-2-enyl diphosphate + 2 reduced [2Fe-2S]-[ferredoxin] + 2 H(+). The catalysed reaction is dimethylallyl diphosphate + 2 oxidized [2Fe-2S]-[ferredoxin] + H2O = (2E)-4-hydroxy-3-methylbut-2-enyl diphosphate + 2 reduced [2Fe-2S]-[ferredoxin] + 2 H(+). It participates in isoprenoid biosynthesis; dimethylallyl diphosphate biosynthesis; dimethylallyl diphosphate from (2E)-4-hydroxy-3-methylbutenyl diphosphate: step 1/1. Its pathway is isoprenoid biosynthesis; isopentenyl diphosphate biosynthesis via DXP pathway; isopentenyl diphosphate from 1-deoxy-D-xylulose 5-phosphate: step 6/6. Its function is as follows. Catalyzes the conversion of 1-hydroxy-2-methyl-2-(E)-butenyl 4-diphosphate (HMBPP) into a mixture of isopentenyl diphosphate (IPP) and dimethylallyl diphosphate (DMAPP). Acts in the terminal step of the DOXP/MEP pathway for isoprenoid precursor biosynthesis. The sequence is that of 4-hydroxy-3-methylbut-2-enyl diphosphate reductase from Rhizobium johnstonii (strain DSM 114642 / LMG 32736 / 3841) (Rhizobium leguminosarum bv. viciae).